Consider the following 168-residue polypeptide: GTP-dependent dephospho-CoA kinase (168 aa).

Residues Asp49, Val50, Val51, Asp68, Lys70, and Glu120 each coordinate GTP.

It belongs to the GTP-dependent DPCK family.

The enzyme catalyses 3'-dephospho-CoA + GTP = GDP + CoA + H(+). It participates in cofactor biosynthesis; coenzyme A biosynthesis. In terms of biological role, catalyzes the GTP-dependent phosphorylation of the 3'-hydroxyl group of dephosphocoenzyme A to form coenzyme A (CoA). The protein is GTP-dependent dephospho-CoA kinase of Pyrobaculum neutrophilum (strain DSM 2338 / JCM 9278 / NBRC 100436 / V24Sta) (Thermoproteus neutrophilus).